Here is a 342-residue protein sequence, read N- to C-terminus: P2Y purinoceptor 12 (342 aa).

Topologically, residues 1–27 (MQAVDNLTSAPGNTSLCTRDYKITQVL) are extracellular. 2 N-linked (GlcNAc...) asparagine glycosylation sites follow: N6 and N13. 2 disulfide bridges follow: C17/C270 and C97/C175. The helical transmembrane segment at 28–50 (FPLLYTVLFFVGLITNGLAMRIF) threads the bilayer. Residues 51-61 (FQIRSKSNFII) lie on the Cytoplasmic side of the membrane. Residues S55 and S57 each carry the phosphoserine modification. Residues 62–82 (FLKNTVISDLLMILTFPFKIL) form a helical membrane-spanning segment. Over 83–97 (SDAKLGTGPLRTFVC) the chain is Extracellular. ADP-binding residues include R93, C97, and Y105. The helical transmembrane segment at 98-118 (QVTSVIFYFTMYISISFLGLI) threads the bilayer. Residues 119 to 142 (TIDRYQKTTRPFKTSNPKNLLGAK) lie on the Cytoplasmic side of the membrane. Residues 143 to 162 (ILSVVIWAFMFLLSLPNMIL) traverse the membrane as a helical segment. Residues 156–159 (SLPN), 175–179 (CSFLK), H187, and N191 contribute to the ADP site. At 163-185 (TNRQPRDKNVKKCSFLKSEFGLV) the chain is on the extracellular side. Residues 186-207 (WHEIVNYICQVIFWINFLIVIV) traverse the membrane as a helical segment. The Cytoplasmic portion of the chain corresponds to 208–233 (CYTLITKELYRSYVRTRGVGKVPRKK). A helical membrane pass occupies residues 234–259 (VNVKVFIIIAVFFICFVPFHFARIPY). Residues 256-259 (RIPY), Q263, and K280 each bind ADP. The Extracellular segment spans residues 260 to 278 (TLSQTRDVFDCTAENTLFY). Residues 279 to 298 (VKESTLWLTSLNACLDPFIY) form a helical membrane-spanning segment. At 299–342 (FFLCKSFRNSLISMLKCPNSATSLSQDNRKKEQDGGDPNEETPM) the chain is on the cytoplasmic side. The interval 319 to 342 (ATSLSQDNRKKEQDGGDPNEETPM) is disordered. Acidic residues predominate over residues 333 to 342 (GGDPNEETPM).

It belongs to the G-protein coupled receptor 1 family. Highly expressed in the platelets, lower levels in the brain. Lowest levels in the lung, appendix, pituitary and adrenal gland. Expressed in the spinal cord and in the fetal brain.

It is found in the cell membrane. Receptor for ADP and ATP coupled to G-proteins that inhibit the adenylyl cyclase second messenger system. Not activated by UDP and UTP. Required for normal platelet aggregation and blood coagulation. The sequence is that of P2Y purinoceptor 12 (P2RY12) from Homo sapiens (Human).